The chain runs to 282 residues: MKKRFLSICTMTIAALATTTMVNTSYAKTDTESHNHSSLGTENKNVLDINSSSHNIKPSQNKSYPSVILPNNNRHQIFNTTQGHYDAVSFIYIPIHGGYMSGSGVVVGENEILTNKHVVNGAKGNPRNISVHPSAKNENDYPNGKFVGQEIIPYPGNSDLAILRVSPNEHNQHIGQVVKPATISSNTDTRINENITVTGYPGDKPLATMWESVGKVVYIGGEELRYDLSTVGGNSGSPVFNGKNQVIGIHYGGVDNKYNSSVYINDFVQQFLRNNIPDINIQ.

The N-terminal stretch at 1 to 27 (MKKRFLSICTMTIAALATTTMVNTSYA) is a signal peptide. A propeptide spanning residues 28–66 (KTDTESHNHSSLGTENKNVLDINSSSHNIKPSQNKSYPS) is cleaved from the precursor. Residues His117, Asp159, and Ser235 each act as charge relay system in the active site.

This sequence belongs to the peptidase S1B family.

The protein localises to the secreted. The enzyme catalyses Preferential cleavage: Glu-|-Xaa, Asp-|-Xaa.. In terms of biological role, exhibits a significant hydrolytic activity for the carbonyl side of glutamic acid. Shows activity toward human fibronectin and type 1 collagen. This chain is Glutamyl endopeptidase (gseA), found in Staphylococcus epidermidis (strain ATCC 35984 / DSM 28319 / BCRC 17069 / CCUG 31568 / BM 3577 / RP62A).